The primary structure comprises 65 residues: Myotoxin-1 (65 aa).

A signal peptide spans methionine 1–alanine 22. Cystine bridges form between cysteine 26–cysteine 58, cysteine 33–cysteine 52, and cysteine 40–cysteine 59.

The protein belongs to the crotamine-myotoxin family. As to quaternary structure, monomer. As to expression, expressed by the venom gland.

The protein localises to the secreted. Cationic peptide that possesses multiple functions. It acts as a cell-penetrating peptide (CPP), and as a potent voltage-gated potassium channel (Kv) inhibitor. It exhibits antimicrobial activities, hind limb paralysis, and severe muscle necrosis by a non-enzymatic mechanism. The sequence is that of Myotoxin-1 from Crotalus durissus terrificus (South American rattlesnake).